The primary structure comprises 859 residues: Leucine--tRNA ligase (859 aa).

Positions 42–52 (PYPSGRLHMGH) match the 'HIGH' region motif. Residues 618-622 (KMSKS) carry the 'KMSKS' region motif. Lys621 serves as a coordination point for ATP.

Belongs to the class-I aminoacyl-tRNA synthetase family.

The protein resides in the cytoplasm. It carries out the reaction tRNA(Leu) + L-leucine + ATP = L-leucyl-tRNA(Leu) + AMP + diphosphate. The chain is Leucine--tRNA ligase from Shewanella putrefaciens (strain CN-32 / ATCC BAA-453).